We begin with the raw amino-acid sequence, 759 residues long: Spindle pole body component alp16 (759 aa).

Interacts with gamma-tubulin.

It is found in the cytoplasm. The protein localises to the cytoskeleton. The protein resides in the microtubule organizing center. Its subcellular location is the spindle pole body. Component of the gamma tubule complex that is required for the regulation of both interphase microtubules and mitotic bipolar spindles. The polypeptide is Spindle pole body component alp16 (alp16) (Schizosaccharomyces pombe (strain 972 / ATCC 24843) (Fission yeast)).